Consider the following 181-residue polypeptide: Probable inosine/xanthosine triphosphatase (181 aa).

Residue D65 coordinates Mg(2+).

Belongs to the YjjX NTPase family. As to quaternary structure, homodimer. The cofactor is Mg(2+). Mn(2+) is required as a cofactor.

The catalysed reaction is XTP + H2O = XDP + phosphate + H(+). It catalyses the reaction ITP + H2O = IDP + phosphate + H(+). Its function is as follows. Phosphatase that hydrolyzes non-canonical purine nucleotides such as XTP and ITP to their respective diphosphate derivatives. Probably excludes non-canonical purines from DNA/RNA precursor pool, thus preventing their incorporation into DNA/RNA and avoiding chromosomal lesions. In Caldivirga maquilingensis (strain ATCC 700844 / DSM 13496 / JCM 10307 / IC-167), this protein is Probable inosine/xanthosine triphosphatase.